Consider the following 640-residue polypeptide: Chaperone protein dnaK2 (640 aa).

Threonine 197 carries the post-translational modification Phosphothreonine; by autocatalysis. Positions 605-640 are disordered; the sequence is VYQSAQSSDGTGSSSSGGSGSGGDDEVIDAEFSETK. Residues 627–640 are compositionally biased toward acidic residues; that stretch reads GDDEVIDAEFSETK.

Belongs to the heat shock protein 70 family.

In terms of biological role, acts as a chaperone. The polypeptide is Chaperone protein dnaK2 (dnaK2) (Thermosynechococcus vestitus (strain NIES-2133 / IAM M-273 / BP-1)).